Consider the following 87-residue polypeptide: Small ribosomal subunit protein bS20 (87 aa).

It belongs to the bacterial ribosomal protein bS20 family.

Functionally, binds directly to 16S ribosomal RNA. This is Small ribosomal subunit protein bS20 from Clostridium beijerinckii (strain ATCC 51743 / NCIMB 8052) (Clostridium acetobutylicum).